The chain runs to 309 residues: Porphobilinogen deaminase (309 aa).

S-(dipyrrolylmethanemethyl)cysteine is present on C241.

The protein belongs to the HMBS family. In terms of assembly, monomer. Dipyrromethane is required as a cofactor.

The enzyme catalyses 4 porphobilinogen + H2O = hydroxymethylbilane + 4 NH4(+). It functions in the pathway porphyrin-containing compound metabolism; protoporphyrin-IX biosynthesis; coproporphyrinogen-III from 5-aminolevulinate: step 2/4. Tetrapolymerization of the monopyrrole PBG into the hydroxymethylbilane pre-uroporphyrinogen in several discrete steps. This chain is Porphobilinogen deaminase, found in Bacillus cereus (strain AH820).